An 82-amino-acid polypeptide reads, in one-letter code: Small ribosomal subunit protein eS17 (82 aa).

It belongs to the eukaryotic ribosomal protein eS17 family.

The polypeptide is Small ribosomal subunit protein eS17 (Sulfolobus acidocaldarius (strain ATCC 33909 / DSM 639 / JCM 8929 / NBRC 15157 / NCIMB 11770)).